Here is a 339-residue protein sequence, read N- to C-terminus: Phosphoribosylformylglycinamidine cyclo-ligase (339 aa).

It belongs to the AIR synthase family.

Its subcellular location is the cytoplasm. The catalysed reaction is 2-formamido-N(1)-(5-O-phospho-beta-D-ribosyl)acetamidine + ATP = 5-amino-1-(5-phospho-beta-D-ribosyl)imidazole + ADP + phosphate + H(+). Its pathway is purine metabolism; IMP biosynthesis via de novo pathway; 5-amino-1-(5-phospho-D-ribosyl)imidazole from N(2)-formyl-N(1)-(5-phospho-D-ribosyl)glycinamide: step 2/2. This Methanobrevibacter smithii (strain ATCC 35061 / DSM 861 / OCM 144 / PS) protein is Phosphoribosylformylglycinamidine cyclo-ligase.